Consider the following 5005-residue polypeptide: MDQRKNDSIVPSITQLEDFLTEHNSNVVWLLVATILSCGWIIYLTYYNSRNVGLILTLVLNRLYKHGYIHIGSFSFSVLSGKVMVREIYYITEDMSIRIQDGFIIFRWWKMYNPKQKQHDPKAETRLYITVNDFEFHVYNRSDLYGRLQELFGLEPTIIPPKKDDDKTRENGRTRTQSKIERVKVKTESQDPTSSWRSLIPVIKVNVSTGRLAFGNHYQPQTLCINFDDAFLTYTTKPPSSHLDQFMHIVKGKLENVRVMLVPSPRYVGLQNDEPPRLMGEGFVVLQSNDVDLYYYMDEPGLVPEETEESTEGDISSEDCKLQDLPPCWGLDIVCGKGTDFNYGPWADRQRDCLWKFFFPPDYQVLKVSEIAQPGRPRQILAFELRMNIITDATIDLLFTKNRETNAVHVNVGAGSYLEINIPMTVDENGYTPAIKGQLLHVDATTSMQYRTLLEAEMLAFHINASYPRIWNMPQTWQCELEVYKATYHFIFAQKNFFTDLIQDWSSDNAPDIFSFVPYTWNFKIMFHQFEMIWAANQHNWIDCSTKQQENVYLAACGETLNIDFSLPFTDFVPATCNTRFSLRGEDVDLHLFLPDCHPSKYSLFMLVKNCHPNKMVPETGIPAECQSGQKTVKPKWRNVTQEKAGWVECWTVPSVMLTIDYTWHPIYPQKADEQLKQSLSEMEETMLSVLRPAQKTSERVVSSPSMSPRPPVDPSELPPDKLHVEMELSPDSQITLYGPLLNAFLCIKENYFGEDDMYMDFEEVISSPVLSLSTSSSSGWTAVGMDNDKRENESSAKSIHPLALRPWDITVLVNLYKVHGRLPVHGTTDGPECPTAFLERLCFEMKKGFRETMLQLVLSPLNVFVSDNYQQRPPVDEVLREGHINLSGLQLRAHAMFSAEGLPLGSDSLEYAWLIDVQAGSLTAKVTAPQLACLLEWGQTFVFHVVCREYELERPKSVIVCQHGIDRRFCESKLSCIPGPCPTSDDLKYTMTRLAIDGSDIYIVEHGCATNIKMGAVRIANCNLHNQSVGEGISAAIQDFQVRQYIEQLNNCRIGLQPAVLRRAYWLEAGSANLGLITVDIALAADHHSKHEAQRHFLETHDARTKRLWFLWPDDTLKNKRCRNKCGCLGGCRFFGGTVTGLDFFKLEELTPSSSSAFSSTSAESDMYYGQSLLQPGEWIITKEIPKTVDGNVNSMKRKEWENKSVGIEGERKTQHLSLQVPLRSHSSSSSSEENSSSSAAQPLLAGEKESPSSAADDHSVQKDLLHSARRDDGQASVPTEISGTSPVSPNTQDKSVGQSPLRSPLKRQASVCSTRLGSTKSLTAAFYGDKQPVTVGVQFSSDVSRSDENVLDSPKQRRSFGSFPYTPSADSNSFHQYRSMDSSMSMADSEAYFSAAEEFEPISSDEGPGTYPGRKKKKKQMQQIDYSRGSIYHSVEGPLAVHGEGITDPRTLPFKTHPSQASFVSALGGEDEVIEHVYIVEGEKRGESEQVTSQQPVMSCYHTYLTQFQVINWSVKHPTNKRTSKSSLHRPLDLDTPTSEESSSSFEQLCVPTFKVIKQGLTANSLLDRGMQLSGSTSNTPYTPLDKKIVDTTDDETLTEEWTLDQPVAQTKTTAIVEVKGTVDVVLTPLVAEALDRYIEAMVHRVSTRHPAAIVDDLHTKVLREAVQNSKTTFSENLSPKQDIRGTKTEHPMIGTTNQGQIQTNVTTKQDNVTIKGLQANVSIPKVNLCLLQASVEESPATVPSRSVTHVSLVALCFDRIATQVRMNRGVVEETANNVDAGKTSNFDRYVHASKMQPQSSGSLRSNAGAEKGKEIAAKLNIHRVHGQLRGLDTTDIGTCAITAIPFEKSKVLFTLEELDEFTFVDETDQQAIPDVTRIGPSQEKWGWIMFECGLENLTIKGGRQSGAVLYNSFGIMGKNSVTERGGVLTSNNSSDSPTGSGYNTDVSDDNLPCDRTSPSSDINGNSVSDEQDEGVESDDLKKDLPLMPPPPDSCSMKLTIKEIWFSFAAPTNVRSPAHAFSRQLNLLSTATPAVGAWLVPIDQLKSSLNKLETEGTLRICAVMGCIMTEALENKSVHFPLRSKYNRLTKVARFLQENPSCLLCNILHHYLHQANYSIIDDATMSDGLPALVTLKKGLVALARQWMKFIVVTPAFKGVSLHRPAQPLKPPATVDQEHEEGLGLDNGGGLQSDTSADGAEFEFDAATVSEHTMLLEGTANRPPPGSSGPVTGAEIMRKLSKTHTHSDSALKIKGIHPYHSLSYTSGDTATDSPVHVGRAGMPVKESPRKESLLSYLTGSFPSLHNLLEGTPQRSSAAVKSSSLTRTGNTVATDMLSEHPLLSEPSSVSFYNWMSNAVGNRGSVVQESPVTKSGHNSLPTGVAPNLPTIPSASDFNTVLSSDQNTLDGTHSQHSTSQDDVAGVEEANQGFPAVQLADAQVVFKPLLSHTGIQSQDTMPLCYRMYFGEHLSFSGTLDCLRADIVDSDTAKDRKGKRARRQGHVNLPPLEFKPALMLETFSISAVVMEKSVCTPQNSTSALSFHDLNKRYYNTFHCNFTISCQSISQHVDMALVRLIHQFSTMIDDIKATQTDIKLSRYTAGSASPTPTFKTRKHRDFRSSDFSRSSRGSLNGGNRVNNAKNKRANNENNKKESRNKNSLGRSERRTSKVSRKGSKDVVDHMTIHMDDSDSITVSEQSEPSAECWQNMYKLLNFYSLISDPTGILEKSSETFGPAGVRSPTEPTCRVVFENEQDNNSLTKTQRKRSLVTSEPQHVTLIVFGIGMVNRTHLEADIGGLTMESELKRIHGSFTLKEKMKDVLHQKMTETCATAHIGGVNIVLLEGITPNIQLEDFPTSPTSTAKQEFLTVVKCSIAKSQALYSAQRGLKTNNAAVFKVGAISINIPQHPATLHSMMVRSSHQLSKQISDLIRQPSTAPQPMKEDIATPLPSEKTPTSVNQTPIETNEFPQLPEGLEKKPIVLKFSAMLDGIAIGAALLPSLKAEYKMGRMRSHGMTGAQTRFTFELPNHRLRFTSKVSATDMSTIPPSASLNLPPVTMSGKYIMEEHDSYSDQVWSIDELPSKQGYYLQGNYLRCVAEVGSFEHNLTTDLLNHLVFVQKVFMKEVNEVIQKVSGGEQPIPLWNEHDGTTDGDKPKILLYSLNLQFKGIQVTATTPSMRAVRFETGLIELELSNRLQTKASPGSSSYLKLFGKCQVDLNLALGQIVKHQVYEEAGSDFHQVAYFKTRIGLRNALREEISGSSDREAVLITLNRPIVYAQPVAFDRAVLFWLNYKAAYDNWNEQRMALHKDIHMATKEVVDMLPGIQQTSAQAFGTLFLQLTVNDLGICLPITNTAQSNHTGDLDTGSALVLTIESTLITACSSESLVSKGHFKNFCIRFADGFETSWDDWKPEIRGDLVMNACVVPDGTYEVCSRTTGQAAAESSSAGTWTLNVLWKMCGIDVHMDPNIGKRLNALGNTLTTLTGEEDIDDIADLNSVNIADLSDEDEVDTMSPTIHTEAVDYRRQGTSSSQPGELRGRKIMKRLVDIRELNEQAKVIDDLKKLGASEGTINQEIQRYQQLESVAVNDIRRDVRKKLRRSSMRAASLKDKWGLGYKPSYSRSKSISASGRPPLKRMERASSRIGETDELPEIRVDAASPGPRVTFNIQDTFPEETELDLLSVTIEGPSHYSSNSEGSCSVFSSPKTTGGFSPSVPFQSEDGRRDDSLSSTSEDSEKDEKDEDRERERFYIYRKPSHTSRKKATGFAAVHQLLTERWPTTPVNRSLSGTATERNIDFELDIRVEIDSGKCVLHPTTLLQEHDDISLRRSYDRSSRSLDQDSPSKKKKFQTNYASTTHLMTGKKVPSSLQTKPSDLETTVFYIPGVDVKLHYNSKTLKTESPNASRGSSLPRTLSKESKLYGMKDSAASPSPSPLPCTVQSKTNTLLPPQPPPIPSAKGKGSGGVKTAKLYAWVALQSLPEEMVISPCLLDFLEKALETIPITPIERNYTAVSSQDEDMGHFDIPDPMEESTTSLVSSSTSAYSSFPVDVVVYVRVQPSQIKFSCLPVSRVECMLKLPSLDLVFSSNRGELETLGTTYPAETVSPGSNAPQTGAKTSASKAGMPGSSGLGSPLGRSRHSSSQSDLTGSSSSSSGLSFTACMSDFSLYVFHPYGAGKQKSTVSGLTSGSGGLGNVDEEPTSVTGRKDSLSINLEFVKVSLSRIRRSGGASFFESQSVSKSTSKMDTTLINISAVCDIGSASFKYDMRRLSEILAFPRAWYRRSIARRLFLGDQTVNLPTSGPGTPDSIEGVSQHLSPESSRKAYCRTWDQPSQSASFTHMPQSPNVFNEHMTNNTMSPGTAAQSLKSPASIRSRSVSDSSVPRRDSISKTSTPVNKSNKAASQQGTPWETLVVFAINLKQLNVQMNMSNVMGNTTWTTSGLKSQGRLSVGSNRDREISMSVGLGRSQLDSKGGVVGGTIDVNALEMVAHISEHPNQQPNHKIQITMGSTESRVDYMGSSILMGIFSNADLKLQDEWKVNLYNALDSSMTDKSEIFVHGDLKWDIFQVMISRSTTPDLIKIGMKLQEFFTQQFDTSKRALSTWGPVPYLPPKTMTNNLEKNSQEQLLDAAHHRHWPGVLKVVSGCHISLFQVPLPEDGMQFGGSMSLHGNHMTLACFHGPNFRSKSWALFHLEEPNIAFWTEAQKIWEDGSSDHSTYIVQTLDFHLGHNTMVTKPCGALESPMATITKITRRRHENPPHGVASVKEWFNYVTATRNEELNLLRNVDANNTENSTTVKNSSLLSGFRGGSSYNHETETIFALPRMQLEFKSIHVQEPQEPSLQDASLKPKVECSVVTEFTDHICVTMDAELIMFLHDLVSAYLKEKEKAIFPPRILSTRPGQKCPLIIHDDSSSDRDREDSITYTTVDWRDFMCNTWHLEPTLRLISWTGRKIDPVGVDYILQKLGFHHARTTIPKWLQRGVMDPLDKVLSVLIKKLGTALQDEKEKKGKDKEEH.

The chain crosses the membrane as a helical span at residues V27–Y47. 2 disordered regions span residues R692–L718 and K1205–C1314. Positions S708–L718 are enriched in pro residues. Residues K1205 to T1215 are compositionally biased toward basic and acidic residues. Low complexity predominate over residues S1226 to S1240. Over residues G1248 to G1275 the composition is skewed to basic and acidic residues. Residues S1278–L1303 show a composition bias toward polar residues. Phosphoserine is present on residues S1301, S1305, and S1323. A Phosphothreonine modification is found at T1325. Disordered stretches follow at residues S1343 to F1376, E1399 to Q1425, T1521 to S1544, and F1676 to T1698. 2 positions are modified to phosphoserine: S1355 and S1406. Over residues T1521–L1530 the composition is skewed to basic residues. Residues Q1684–H1693 are compositionally biased toward basic and acidic residues. Phosphoserine occurs at positions 1805 and 1808. Disordered regions lie at residues R1927–P1991, P2165–Q2192, T2265–P2288, E2367–P2387, S2400–V2420, and T2598–V2677. Composition is skewed to polar residues over residues L1931–D1948 and T1959–S1971. 3 stretches are compositionally biased toward polar residues: residues E2367 to P2379, S2400 to D2418, and T2598 to F2608. 2 positions are modified to phosphoserine: S2601 and S2603. Residues S2619 to A2638 show a composition bias toward low complexity. Residues A2643–T2665 are compositionally biased toward basic and acidic residues. S2755 is subject to Phosphoserine. Residues R2928 to L2967 form a disordered region. A compositionally biased stretch (polar residues) spans K2949–F2964. Residues S3562, E3577, and S3653 each carry the phosphoserine modification. Disordered regions lie at residues Y3614–I3662, S3686–Y3744, R3821–Q3843, K3935–G3954, T4089–S4145, and Q4325–Q4396. Positions S3686 to F3711 are enriched in polar residues. Residues E3727–E3736 show a composition bias toward acidic residues. Over residues R3821 to S3837 the composition is skewed to basic and acidic residues. Over residues S4097–S4112 the composition is skewed to polar residues. A compositionally biased stretch (low complexity) spans P4117–S4145. S4124 bears the Phosphoserine mark. Residues Q4325–K4358 are compositionally biased toward polar residues. The span at S4359–S4372 shows a compositional bias: low complexity. Residues K4381–Q4396 show a composition bias toward polar residues.

In terms of tissue distribution, highly expressed in testis and ovary. Weakly or not expressed in other tissues.

The protein resides in the cell membrane. It localises to the endoplasmic reticulum membrane. Its subcellular location is the mitochondrion membrane. In terms of biological role, tube-forming lipid transport protein which provides phosphatidylethanolamine for glycosylphosphatidylinositol (GPI) anchor synthesis in the endoplasmic reticulum. Plays a role in endosomal trafficking and endosome recycling. Also involved in the actin cytoskeleton and cilia structural dynamics. Acts as a regulator of phagocytosis. The sequence is that of Bridge-like lipid transfer protein family member 1 (Bltp1) from Mus musculus (Mouse).